A 307-amino-acid chain; its full sequence is Aspartate carbamoyltransferase catalytic subunit (307 aa).

Carbamoyl phosphate-binding residues include Arg-56 and Thr-57. L-aspartate is bound at residue Lys-84. Carbamoyl phosphate contacts are provided by Arg-106, His-136, and Gln-139. L-aspartate is bound by residues Arg-169 and Arg-221. Ala-262 and Pro-263 together coordinate carbamoyl phosphate.

It belongs to the aspartate/ornithine carbamoyltransferase superfamily. ATCase family. In terms of assembly, heterododecamer (2C3:3R2) of six catalytic PyrB chains organized as two trimers (C3), and six regulatory PyrI chains organized as three dimers (R2).

It carries out the reaction carbamoyl phosphate + L-aspartate = N-carbamoyl-L-aspartate + phosphate + H(+). The protein operates within pyrimidine metabolism; UMP biosynthesis via de novo pathway; (S)-dihydroorotate from bicarbonate: step 2/3. Catalyzes the condensation of carbamoyl phosphate and aspartate to form carbamoyl aspartate and inorganic phosphate, the committed step in the de novo pyrimidine nucleotide biosynthesis pathway. The protein is Aspartate carbamoyltransferase catalytic subunit of Streptococcus pneumoniae (strain JJA).